The primary structure comprises 310 residues: Zinc finger protein 346 (310 aa).

M1 is modified (N-acetylmethionine). Over residues 1–12 (MEYPAPAAVQAA) the composition is skewed to low complexity. The interval 1–33 (MEYPAPAAVQAADGGGAGPYNSSELLEGQEPDG) is disordered. The segment at 70–104 (FTNTQCKVCCALLISESQKLAHYQSKKHANKVKRY) adopts a Matrin-type 1 zinc-finger fold. Residues C75, C78, H91, and H97 each contribute to the Zn(2+) site. Residue K114 forms a Glycyl lysine isopeptide (Lys-Gly) (interchain with G-Cter in SUMO2) linkage. A Matrin-type 2 zinc finger spans residues 131–165 (DKNQCCPICNMTFSSPVVAQSHYLGKTHAKNLKLK). C136, C139, H152, and H158 together coordinate Zn(2+). Residue K170 forms a Glycyl lysine isopeptide (Lys-Gly) (interchain with G-Cter in SUMO2) linkage. 2 Matrin-type zinc fingers span residues 198–232 (DPDK…ETKL) and 252–286 (GKGY…SPKT). The interval 278–310 (KHKNQSPKTVASSLGQIPMQRQPIQKDSTTLED) is disordered. Composition is skewed to polar residues over residues 283-292 (SPKTVASSLG) and 299-310 (QPIQKDSTTLED).

In terms of assembly, forms a heteromeric complex with XPO5 and ILF3. Found in a nuclear export complex with XPO5, RAN, ILF3, ZNF346 and double-stranded RNA. Interacts with XPO5. Interacts with ILF3 in an RNA-independent manner.

It localises to the nucleus. The protein resides in the nucleolus. The protein localises to the cytoplasm. In terms of biological role, binds with low affinity to dsDNA and ssRNA, and with high affinity to dsRNA, with no detectable sequence specificity. The chain is Zinc finger protein 346 (ZNF346) from Pongo abelii (Sumatran orangutan).